Consider the following 356-residue polypeptide: Holliday junction branch migration complex subunit RuvB (356 aa).

Over residues 1 to 14 (MAIVSSITNHSSLP) the composition is skewed to polar residues. A disordered region spans residues 1–20 (MAIVSSITNHSSLPNDKGEE). Positions 13-201 (LPNDKGEERL…FGITQRLDFY (189 aa)) are large ATPase domain (RuvB-L). ATP-binding residues include leucine 40, arginine 41, glycine 82, lysine 85, threonine 86, threonine 87, arginine 191, tyrosine 201, and arginine 238. Threonine 86 serves as a coordination point for Mg(2+). Residues 202-273 (NYLDLENIIK…VVNDALDLHR (72 aa)) are small ATPAse domain (RuvB-S). The interval 276–356 (QRGLDATDRS…LLTSPNNIDK (81 aa)) is head domain (RuvB-H). 2 residues coordinate DNA: arginine 331 and arginine 336.

Belongs to the RuvB family. Homohexamer. Forms an RuvA(8)-RuvB(12)-Holliday junction (HJ) complex. HJ DNA is sandwiched between 2 RuvA tetramers; dsDNA enters through RuvA and exits via RuvB. An RuvB hexamer assembles on each DNA strand where it exits the tetramer. Each RuvB hexamer is contacted by two RuvA subunits (via domain III) on 2 adjacent RuvB subunits; this complex drives branch migration. In the full resolvosome a probable DNA-RuvA(4)-RuvB(12)-RuvC(2) complex forms which resolves the HJ.

The protein resides in the cytoplasm. The enzyme catalyses ATP + H2O = ADP + phosphate + H(+). Functionally, the RuvA-RuvB-RuvC complex processes Holliday junction (HJ) DNA during genetic recombination and DNA repair, while the RuvA-RuvB complex plays an important role in the rescue of blocked DNA replication forks via replication fork reversal (RFR). RuvA specifically binds to HJ cruciform DNA, conferring on it an open structure. The RuvB hexamer acts as an ATP-dependent pump, pulling dsDNA into and through the RuvAB complex. RuvB forms 2 homohexamers on either side of HJ DNA bound by 1 or 2 RuvA tetramers; 4 subunits per hexamer contact DNA at a time. Coordinated motions by a converter formed by DNA-disengaged RuvB subunits stimulates ATP hydrolysis and nucleotide exchange. Immobilization of the converter enables RuvB to convert the ATP-contained energy into a lever motion, pulling 2 nucleotides of DNA out of the RuvA tetramer per ATP hydrolyzed, thus driving DNA branch migration. The RuvB motors rotate together with the DNA substrate, which together with the progressing nucleotide cycle form the mechanistic basis for DNA recombination by continuous HJ branch migration. Branch migration allows RuvC to scan DNA until it finds its consensus sequence, where it cleaves and resolves cruciform DNA. This chain is Holliday junction branch migration complex subunit RuvB, found in Prochlorococcus marinus (strain NATL2A).